We begin with the raw amino-acid sequence, 458 residues long: UDP-N-acetylglucosamine 1-carboxyvinyltransferase (458 aa).

Residue 22 to 23 (KN) coordinates phosphoenolpyruvate. Arg-94 contacts UDP-N-acetyl-alpha-D-glucosamine. Asp-119 (proton donor) is an active-site residue. UDP-N-acetyl-alpha-D-glucosamine-binding residues include Asp-309 and Val-331.

This sequence belongs to the EPSP synthase family. MurA subfamily.

The protein resides in the cytoplasm. The enzyme catalyses phosphoenolpyruvate + UDP-N-acetyl-alpha-D-glucosamine = UDP-N-acetyl-3-O-(1-carboxyvinyl)-alpha-D-glucosamine + phosphate. It participates in cell wall biogenesis; peptidoglycan biosynthesis. In terms of biological role, cell wall formation. Adds enolpyruvyl to UDP-N-acetylglucosamine. The sequence is that of UDP-N-acetylglucosamine 1-carboxyvinyltransferase from Chlamydia pneumoniae (Chlamydophila pneumoniae).